A 310-amino-acid chain; its full sequence is Putative HTH-type transcriptional regulatory protein M1425_1284 (310 aa).

Residues 125 to 180 (LKHKREEMGYSIGDVAKFLGVSRKAIYDYEKGDSDVSLEVAEKLIDLFGDDIIGDV) form the HTH cro/C1-type domain. Residues 136–155 (IGDVAKFLGVSRKAIYDYEK) constitute a DNA-binding region (H-T-H motif).

This is Putative HTH-type transcriptional regulatory protein M1425_1284 from Saccharolobus islandicus (strain M.14.25 / Kamchatka #1) (Sulfolobus islandicus).